We begin with the raw amino-acid sequence, 258 residues long: NAD-capped RNA hydrolase NudC (258 aa).

R69 contributes to the substrate binding site. Zn(2+) is bound by residues C98 and C101. Residue E111 participates in substrate binding. Positions 116 and 119 each coordinate Zn(2+). Y124 is a substrate binding site. Residues 125 to 248 (PQIAPCIIVA…TVARRLIEDT (124 aa)) form the Nudix hydrolase domain. 3 residues coordinate a divalent metal cation: A158, E174, and E178. The Nudix box motif lies at 159–180 (GFVEVGETLEQTVAREVMEESG). 192–199 (QPWPFPMS) contacts substrate. E219 contacts a divalent metal cation. Substrate is bound at residue A241.

The protein belongs to the Nudix hydrolase family. NudC subfamily. As to quaternary structure, homodimer. It depends on Mg(2+) as a cofactor. Mn(2+) serves as cofactor. Zn(2+) is required as a cofactor.

The catalysed reaction is a 5'-end NAD(+)-phospho-ribonucleoside in mRNA + H2O = a 5'-end phospho-adenosine-phospho-ribonucleoside in mRNA + beta-nicotinamide D-ribonucleotide + 2 H(+). It catalyses the reaction NAD(+) + H2O = beta-nicotinamide D-ribonucleotide + AMP + 2 H(+). The enzyme catalyses NADH + H2O = reduced beta-nicotinamide D-ribonucleotide + AMP + 2 H(+). In terms of biological role, mRNA decapping enzyme that specifically removes the nicotinamide adenine dinucleotide (NAD) cap from a subset of mRNAs by hydrolyzing the diphosphate linkage to produce nicotinamide mononucleotide (NMN) and 5' monophosphate mRNA. The NAD-cap is present at the 5'-end of some mRNAs and stabilizes RNA against 5'-processing. Has preference for mRNAs with a 5'-end purine. Catalyzes the hydrolysis of a broad range of dinucleotide pyrophosphates. This is NAD-capped RNA hydrolase NudC from Enterobacter sp. (strain 638).